Reading from the N-terminus, the 187-residue chain is PsbQ-like protein 3, chloroplastic (187 aa).

Residues 1–32 (MAISKPPPLHFTFFHNQDSSIDTSDSNLALSI) constitute a chloroplast transit peptide. The transit peptide at 33–60 (DTSRRRRDVLLTISGTLIPQLFFFDRKR) directs the protein to the thylakoid.

This sequence belongs to the PsbQ family. As to quaternary structure, subunit of the lumenal protuberance of the NDH complex.

It is found in the plastid. Its subcellular location is the chloroplast thylakoid membrane. Its function is as follows. Required for both formation and activity of the chloroplast NAD(P)H dehydrogenase (NDH) complex. In Arabidopsis thaliana (Mouse-ear cress), this protein is PsbQ-like protein 3, chloroplastic (PQL3).